We begin with the raw amino-acid sequence, 266 residues long: Thymidylate synthase (266 aa).

R24 contacts dUMP. H54 is a binding site for (6R)-5,10-methylene-5,6,7,8-tetrahydrofolate. Residue 129–130 coordinates dUMP; it reads RR. The Nucleophile role is filled by C149. Residues 169 to 172, N180, and 210 to 212 each bind dUMP; these read RSAD and HIY. D172 provides a ligand contact to (6R)-5,10-methylene-5,6,7,8-tetrahydrofolate. A265 is a (6R)-5,10-methylene-5,6,7,8-tetrahydrofolate binding site.

This sequence belongs to the thymidylate synthase family. Bacterial-type ThyA subfamily. As to quaternary structure, homodimer.

It is found in the cytoplasm. The catalysed reaction is dUMP + (6R)-5,10-methylene-5,6,7,8-tetrahydrofolate = 7,8-dihydrofolate + dTMP. It participates in pyrimidine metabolism; dTTP biosynthesis. Functionally, catalyzes the reductive methylation of 2'-deoxyuridine-5'-monophosphate (dUMP) to 2'-deoxythymidine-5'-monophosphate (dTMP) while utilizing 5,10-methylenetetrahydrofolate (mTHF) as the methyl donor and reductant in the reaction, yielding dihydrofolate (DHF) as a by-product. This enzymatic reaction provides an intracellular de novo source of dTMP, an essential precursor for DNA biosynthesis. This is Thymidylate synthase from Mycobacterium bovis (strain ATCC BAA-935 / AF2122/97).